The primary structure comprises 703 residues: Polyribonucleotide nucleotidyltransferase (703 aa).

Residues Asp-488 and Asp-494 each coordinate Mg(2+). A KH domain is found at 555–614; the sequence is PKIVKMQINPDKIKDVIGPGGKIITKIIDETGVKIDIEQTGEVFISGIEIDMIKKAQELI. The S1 motif domain maps to 624–692; that stretch reads GKTYKGKVSR…EKGRVNLSRK (69 aa).

The protein belongs to the polyribonucleotide nucleotidyltransferase family. Mg(2+) is required as a cofactor.

The protein resides in the cytoplasm. The enzyme catalyses RNA(n+1) + phosphate = RNA(n) + a ribonucleoside 5'-diphosphate. Functionally, involved in mRNA degradation. Catalyzes the phosphorolysis of single-stranded polyribonucleotides processively in the 3'- to 5'-direction. The polypeptide is Polyribonucleotide nucleotidyltransferase (Clostridioides difficile (strain 630) (Peptoclostridium difficile)).